The sequence spans 301 residues: Polynucleotide kinase (301 aa).

Homotetramer. Mg(2+) is required as a cofactor.

The enzyme catalyses a 5'-end dephospho-2'-deoxyribonucleoside-DNA + ATP = a 5'-end 5'-phospho-2'-deoxyribonucleoside-DNA + ADP + H(+). It carries out the reaction a 2'-deoxyribonucleoside 3'-phosphate + H2O = a 2'-deoxyribonucleoside + phosphate. Functionally, acts as a 5'-hydroxyl kinase, a 3'-phosphatase and a 2',3'-cyclic phosphodiesterase. Catalyzes the transfer of the terminal phosphate of ATP to the 5'-hydroxyl termini of ribo- and deoxyribonucleotides. In the presence of ADP the enzyme also catalyzes an exchange reaction. In the exchange reaction, an excess ADP causes the enzyme to transfer the 5' terminal phosphate from phosphorylated DNA to ADP. Involved in countering a host defense mechanism which activates T4-induced anticodon nuclease and shuts off viral translation. The polynucleotide kinase modifies the ends of nicked tRNA generated by the antiviral response of the host bacteria and facilitates repair by T4 RNA ligase. The polypeptide is Polynucleotide kinase (pseT) (Escherichia coli (Bacteriophage T4)).